Reading from the N-terminus, the 28-residue chain is Ranatuerin-2SEb (28 aa).

The cysteines at positions 23 and 28 are disulfide-linked.

Expressed by the skin glands.

It localises to the secreted. In terms of biological role, mast cell degranulating peptide. Causes histamine release from rat peritoneal mast cells in vitro. Has antibacterial activity against the Gram-negative bacterium E.coli K12 and Gram-positive bacterium M.luteus NCT C2665. The chain is Ranatuerin-2SEb from Lithobates sevosus (Dusky gopher frog).